Here is a 237-residue protein sequence, read N- to C-terminus: Orotidine 5'-phosphate decarboxylase (237 aa).

Substrate is bound by residues D10, K33, 60–69 (DLKLHDIPNT), T124, R186, Q195, G215, and R216. K62 acts as the Proton donor in catalysis.

This sequence belongs to the OMP decarboxylase family. Type 1 subfamily. As to quaternary structure, homodimer.

It carries out the reaction orotidine 5'-phosphate + H(+) = UMP + CO2. The protein operates within pyrimidine metabolism; UMP biosynthesis via de novo pathway; UMP from orotate: step 2/2. Catalyzes the decarboxylation of orotidine 5'-monophosphate (OMP) to uridine 5'-monophosphate (UMP). The protein is Orotidine 5'-phosphate decarboxylase of Lactiplantibacillus plantarum (strain ATCC BAA-793 / NCIMB 8826 / WCFS1) (Lactobacillus plantarum).